A 432-amino-acid polypeptide reads, in one-letter code: 3-phosphoshikimate 1-carboxyvinyltransferase (432 aa).

The 3-phosphoshikimate site is built by Lys22, Ser23, and Arg27. Lys22 is a phosphoenolpyruvate binding site. 2 residues coordinate phosphoenolpyruvate: Gly96 and Arg127. Ser173, Ser174, Gln175, Ser201, Asp317, Asn340, and Lys344 together coordinate 3-phosphoshikimate. Gln175 is a phosphoenolpyruvate binding site. The active-site Proton acceptor is Asp317. Phosphoenolpyruvate-binding residues include Arg348, Arg392, and Lys417.

Belongs to the EPSP synthase family. In terms of assembly, monomer.

The protein resides in the cytoplasm. The enzyme catalyses 3-phosphoshikimate + phosphoenolpyruvate = 5-O-(1-carboxyvinyl)-3-phosphoshikimate + phosphate. Its pathway is metabolic intermediate biosynthesis; chorismate biosynthesis; chorismate from D-erythrose 4-phosphate and phosphoenolpyruvate: step 6/7. Catalyzes the transfer of the enolpyruvyl moiety of phosphoenolpyruvate (PEP) to the 5-hydroxyl of shikimate-3-phosphate (S3P) to produce enolpyruvyl shikimate-3-phosphate and inorganic phosphate. The protein is 3-phosphoshikimate 1-carboxyvinyltransferase of Mannheimia haemolytica (Pasteurella haemolytica).